A 288-amino-acid chain; its full sequence is Bifunctional protein FolD (288 aa).

Residues 171–173 (GRS), S196, and T237 each bind NADP(+).

The protein belongs to the tetrahydrofolate dehydrogenase/cyclohydrolase family. As to quaternary structure, homodimer.

The enzyme catalyses (6R)-5,10-methylene-5,6,7,8-tetrahydrofolate + NADP(+) = (6R)-5,10-methenyltetrahydrofolate + NADPH. It carries out the reaction (6R)-5,10-methenyltetrahydrofolate + H2O = (6R)-10-formyltetrahydrofolate + H(+). Its pathway is one-carbon metabolism; tetrahydrofolate interconversion. In terms of biological role, catalyzes the oxidation of 5,10-methylenetetrahydrofolate to 5,10-methenyltetrahydrofolate and then the hydrolysis of 5,10-methenyltetrahydrofolate to 10-formyltetrahydrofolate. In Elusimicrobium minutum (strain Pei191), this protein is Bifunctional protein FolD.